Consider the following 4293-residue polypeptide: Polycystin-1 (4293 aa).

A signal peptide spans Met-1 to Ala-23. The LRRNT domain maps to Gly-24–Ala-67. At Gly-24 to Asn-3066 the chain is on the extracellular side. Residues Asn-50 and Asn-89 are each glycosylated (N-linked (GlcNAc...) asparagine). LRR repeat units follow at residues Asp-68–Ser-91 and Ala-92–Asn-113. N-linked (GlcNAc...) asparagine glycans are attached at residues Asn-116 and Asn-121. The 54-residue stretch at Asn-125–Glu-178 folds into the LRRCT domain. Positions Gly-177–Ala-271 constitute a WSC domain. N-linked (GlcNAc...) asparagine glycosylation is found at Asn-187 and Asn-239. Residues Ser-272–Leu-359 enclose the PKD 1 domain. Asn-370 is a glycosylation site (N-linked (GlcNAc...) asparagine). In terms of domain architecture, C-type lectin spans Gly-415–Glu-530. Cystine bridges form between Cys-436/Cys-529 and Cys-507/Cys-521. The segment at Gly-613 to Ala-632 is disordered. Asn-627 is a glycosylation site (N-linked (GlcNAc...) asparagine). The LDL-receptor class A; atypical domain maps to Pro-633–Ser-666. Intrachain disulfides connect Cys-635–Cys-648 and Cys-642–Cys-660. Asn-662, Asn-740, Asn-804, Asn-835, Asn-848, Asn-859, Asn-884, Asn-915, Asn-998, Asn-1004, Asn-1028, Asn-1084, Asn-1096, Asn-1107, Asn-1172, Asn-1188, Asn-1234, Asn-1263, Asn-1330, Asn-1342, Asn-1376, Asn-1444, Asn-1449, Asn-1468, Asn-1535, Asn-1548, Asn-1557, Asn-1643, Asn-1657, Asn-1706, Asn-1730, Asn-1788, Asn-1831, Asn-1863, and Asn-1876 each carry an N-linked (GlcNAc...) asparagine glycan. PKD domains lie at Ala-849 to Ala-922, Leu-929 to His-1014, Trp-1017 to Val-1123, Pro-1121 to Leu-1209, His-1207 to His-1292, Leu-1288 to Ile-1377, Asn-1376 to Thr-1463, Val-1462 to Leu-1545, Gly-1544 to Leu-1629, Gln-1630 to Leu-1718, Glu-1716 to Leu-1802, Ile-1804 to Leu-1886, Asn-1885 to Leu-1970, Val-1972 to Val-2053, and Ile-2056 to Glu-2144. N-linked (GlcNAc...) asparagine glycosylation is found at Asn-1987, Asn-2046, Asn-2070, Asn-2121, Asn-2244, Asn-2349, Asn-2391, Asn-2408, Asn-2414, Asn-2563, Asn-2640, Asn-2713, Asn-2749, Asn-2813, Asn-2836, Asn-2873, Asn-2948, and Asn-2986. Residues Cys-2142 to Pro-2828 form the REJ domain. The GAIN-B domain maps to Pro-2857–Gln-3055. Cys-3007 and Cys-3035 are joined by a disulfide. The interval Cys-3007–Gln-3055 is GPS. A helical transmembrane segment spans residues Tyr-3067–Leu-3087. Over Arg-3088–Arg-3269 the chain is Cytoplasmic. The PLAT domain occupies Phe-3110–Glu-3225. Residues Val-3270 to Trp-3290 traverse the membrane as a helical segment. Residues Tyr-3291–Val-3315 lie on the Extracellular side of the membrane. The chain crosses the membrane as a helical span at residues Ala-3316–Phe-3336. The Cytoplasmic portion of the chain corresponds to Arg-3337 to His-3549. Residues Gly-3550–Phe-3570 form a helical membrane-spanning segment. Topologically, residues Pro-3571 to Pro-3572 are extracellular. A helical membrane pass occupies residues Ser-3573–Trp-3593. At Glu-3594–Lys-3655 the chain is on the cytoplasmic side. Residues Arg-3656–Leu-3676 form a helical membrane-spanning segment. Over Ala-3677–Leu-3891 the chain is Extracellular. Residues Asn-3728 and Asn-3780 are each glycosylated (N-linked (GlcNAc...) asparagine). A helical transmembrane segment spans residues Leu-3892–Trp-3912. The Cytoplasmic portion of the chain corresponds to Arg-3913–Thr-3925. Residues Trp-3926–Leu-3946 traverse the membrane as a helical segment. The Extracellular portion of the chain corresponds to Gly-3947 to Gly-3974. A helical membrane pass occupies residues Ser-3975 to Gln-3995. The Cytoplasmic segment spans residues Leu-3996 to Met-4017. A helical membrane pass occupies residues Gly-4018 to Ile-4038. Residues Ser-4039–Leu-4080 are Extracellular-facing. A helical transmembrane segment spans residues Trp-4081–Tyr-4100. Over His-4101–Thr-4293 the chain is Cytoplasmic. Disordered regions lie at residues Pro-4150–Lys-4197 and Ser-4235–Thr-4293. A compositionally biased stretch (low complexity) spans Ser-4153–Ser-4172. Residue Ser-4156 is modified to Phosphoserine; by PRKX; in vitro. The span at Glu-4173 to Thr-4195 shows a compositional bias: polar residues. Positions Glu-4210–His-4241 form a coiled coil. Residues Gly-4238–Ser-4256 show a composition bias toward low complexity. The segment covering Ser-4265–Gly-4276 has biased composition (polar residues).

This sequence belongs to the polycystin family. Component of the heterotetrameric polycystin channel complex with PKD2; the tetramer contains one PKD1 chain and three PKD2 chains. Interacts with PKD2; the interaction is required for ciliary localization. Interacts with PKD2L1. Interacts with PRKX; involved in differentiation and controlled morphogenesis of the kidney. Interacts (via extracellular domain) with WNT3A, WNT4 and WNT9B. Interacts with WNT5A, DVL1 and DVL2. Interacts with NPHP1 (via SH3 domain). Interacts with BBS1, BBS4, BBS5 and TTC8. Interacts with RGS7. Interacts (via C-terminal domain) with RABEP1; the interaction connects PKD1:PKD2 to GGA1 and ARL3 that mediate the ciliary targeting. Interacts (via the PKD repeats in the N-terminal extracellular region) with EPCIP; the interaction is not dependent on N-glycosylation of either protein. N-glycosylated. Post-translationally, after synthesis, undergoes autoproteolytic cleavage between Leu-3040 and Thr-3041 in the GPS region of the GAIN-B domain. Cleavage at the GPS region occurs through a cis-autoproteolytic mechanism involving an ester-intermediate via N-O acyl rearrangement. This process takes place in the early secretory pathway, depends on initial N-glycosylation, and requires the REJ domain. PKD1 is ubiquitously and incompletely cleaved in wild-type mice, so that uncleaved and cleaved PKD1 molecules coexist. The differential patterns of cleavage during embryonic development, as well as in adult mice, suggest different functions of uncleaved and cleaved molecules.

It is found in the cell membrane. The protein resides in the cell projection. It localises to the cilium. Its subcellular location is the endoplasmic reticulum. The protein localises to the golgi apparatus. It is found in the vesicle. The protein resides in the secreted. It localises to the extracellular exosome. In terms of biological role, component of a heteromeric calcium-permeable ion channel formed by PKD1 and PKD2 that is activated by interaction between PKD1 and a Wnt family member, such as WNT3A and WNT9B. Both PKD1 and PKD2 are required for channel activity. Involved in renal tubulogenesis. Involved in fluid-flow mechanosensation by the primary cilium in renal epithelium. Acts as a regulator of cilium length, together with PKD2. The dynamic control of cilium length is essential in the regulation of mechanotransductive signaling. The cilium length response creates a negative feedback loop whereby fluid shear-mediated deflection of the primary cilium, which decreases intracellular cAMP, leads to cilium shortening and thus decreases flow-induced signaling. May be an ion-channel regulator. Involved in adhesive protein-protein and protein-carbohydrate interactions. Likely to be involved with polycystin-1-interacting protein 1 in the detection, sequestration and exocytosis of senescent mitochondria. The chain is Polycystin-1 from Mus musculus (Mouse).